The sequence spans 210 residues: Ribonuclease HII (210 aa).

One can recognise an RNase H type-2 domain in the interval 18 to 208 (YPVAGIDEAG…VNDIISQTKL (191 aa)). The a divalent metal cation site is built by D24, E25, and D116.

It belongs to the RNase HII family. Mn(2+) is required as a cofactor. The cofactor is Mg(2+).

The protein localises to the cytoplasm. The catalysed reaction is Endonucleolytic cleavage to 5'-phosphomonoester.. Functionally, endonuclease that specifically degrades the RNA of RNA-DNA hybrids. This is Ribonuclease HII from Endomicrobium trichonymphae.